The chain runs to 188 residues: Ribosome-recycling factor (188 aa).

This sequence belongs to the RRF family.

The protein localises to the cytoplasm. Its function is as follows. Responsible for the release of ribosomes from messenger RNA at the termination of protein biosynthesis. May increase the efficiency of translation by recycling ribosomes from one round of translation to another. The chain is Ribosome-recycling factor from Blochmanniella pennsylvanica (strain BPEN).